A 1122-amino-acid chain; its full sequence is Breast carcinoma-amplified sequence 3 homolog (1122 aa).

The tract at residues 1–41 (MSADSPRRHPSGVVGSGIGLGSGSGTGLGSGSTGGSKSGAA) is disordered. Gly residues predominate over residues 14 to 37 (VGSGIGLGSGSGTGLGSGSTGGSK). Phosphoserine is present on S55. Composition is skewed to low complexity over residues 357 to 377 (GTTA…ASGG), 626 to 641 (GSNS…SLSD), 966 to 987 (TKDN…PSSN), and 1036 to 1051 (LSLE…PLSL). Disordered regions lie at residues 357 to 382 (GTTA…DAKQ), 620 to 644 (GVGV…DDSG), 966 to 990 (TKDN…NKVQ), 1033 to 1054 (NSRL…LTNG), and 1071 to 1122 (GVAQ…RRNL). S638 bears the Phosphoserine mark. Acidic residues predominate over residues 1087 to 1112 (VDDDDEEEEEEEEELDEEAEPDDDER). Basic and acidic residues predominate over residues 1113–1122 (EDRPLGRRNL).

The protein belongs to the BCAS3 family. As to expression, expressed in all postembryonic pericardial cells, but not in cardioblasts. Also expressed in Garland cells in third instar larvae (at protein level).

The protein localises to the cytoplasm. Its function is as follows. Regulates macropinocytosis in pericardial cells. This chain is Breast carcinoma-amplified sequence 3 homolog (rudhira), found in Drosophila melanogaster (Fruit fly).